Consider the following 142-residue polypeptide: Small heat shock protein IbpB (142 aa).

In terms of domain architecture, sHSP spans 26-137 (SGESQSFPPY…PPQRIAINER (112 aa)).

The protein belongs to the small heat shock protein (HSP20) family. In terms of assembly, homodimer. Forms homomultimers of about 100-150 subunits at optimal growth temperatures. Conformation changes to oligomers at high temperatures or high ionic concentrations. The decrease in size of the multimers is accompanied by an increase in chaperone activity.

The protein resides in the cytoplasm. Associates with aggregated proteins, together with IbpA, to stabilize and protect them from irreversible denaturation and extensive proteolysis during heat shock and oxidative stress. Aggregated proteins bound to the IbpAB complex are more efficiently refolded and reactivated by the ATP-dependent chaperone systems ClpB and DnaK/DnaJ/GrpE. Its activity is ATP-independent. This is Small heat shock protein IbpB from Salmonella typhi.